The sequence spans 156 residues: Biotin carboxyl carrier protein of acetyl-CoA carboxylase (156 aa).

The 84-residue stretch at 73-156 (PAAAEISGHI…EFDEPLVVIE (84 aa)) folds into the Biotinyl-binding domain. Lys-122 carries the N6-biotinyllysine modification.

In terms of assembly, homodimer.

It functions in the pathway lipid metabolism; fatty acid biosynthesis. Its function is as follows. This protein is a component of the acetyl coenzyme A carboxylase complex; first, biotin carboxylase catalyzes the carboxylation of the carrier protein and then the transcarboxylase transfers the carboxyl group to form malonyl-CoA. This Escherichia coli O6:H1 (strain CFT073 / ATCC 700928 / UPEC) protein is Biotin carboxyl carrier protein of acetyl-CoA carboxylase (accB).